A 430-amino-acid polypeptide reads, in one-letter code: Ethylene-responsive transcription factor WRI1 (430 aa).

Positions 1–26 (MKKRLTTSTCSSSPSSSVSSSTTTSS) are enriched in low complexity. The interval 1–66 (MKKRLTTSTC…PASTRRSSIY (66 aa)) is disordered. Polar residues predominate over residues 53–63 (NPTSPASTRRS). The AP2/ERF 1 DNA-binding region spans 65–131 (IYRGVTRHRW…WGPDTILNFP (67 aa)). At T70 the chain carries Phosphothreonine; by KIN10. S166 is modified (phosphoserine; by KIN10). Residues 167–225 (KYRGVARHHHNGRWEARIGRVFGNKYLYLGTYNTQEEAAAAYDMAAIEYRGANAVTNFD) constitute a DNA-binding region (AP2/ERF 2). Residues 260–274 (VETREAKEEPREEVK) are compositionally biased toward basic and acidic residues. Disordered stretches follow at residues 260 to 297 (VETR…EQQE) and 398 to 422 (SPPS…TTTT).

This sequence belongs to the AP2/ERF transcription factor family. AP2 subfamily. As to quaternary structure, interacts with KIN10 and KIN11. In terms of processing, ubiquitinated. The phosphorylation at Thr-70 and Ser-166 by KIN10 facilitates its degradation via the proteasomal pathway. Mostly expressed in siliques, especially in seeds. Also detected in roots and flowers, and, to a lower extent, in leaves stems and seedlings.

Its subcellular location is the nucleus. With respect to regulation, down-regulated by KIN10 that controls its protein stability under a phosphorylation-dependent manner. In terms of biological role, may be involved in the regulation of gene expression by stress factors and by components of stress signal transduction pathways. Transcriptional activator involved in the activation of a subset of sugar-responsive genes and the control of carbon flow from sucrose import to oil accumulation in developing seeds. Binds to the GCC-box pathogenesis-related promoter element. Promotes sugar uptake and seed oil accumulation by glycolysis. Required for embryo development, seed germination and, indirectly, for seedling establishment. Negative regulator of the ABA-mediated germination inhibition. The polypeptide is Ethylene-responsive transcription factor WRI1 (WRI1) (Arabidopsis thaliana (Mouse-ear cress)).